A 585-amino-acid chain; its full sequence is Arginine--tRNA ligase (585 aa).

Residues 131 to 141 carry the 'HIGH' region motif; that stretch reads ANPTGPMHVGH.

It belongs to the class-I aminoacyl-tRNA synthetase family. In terms of assembly, monomer.

Its subcellular location is the cytoplasm. It carries out the reaction tRNA(Arg) + L-arginine + ATP = L-arginyl-tRNA(Arg) + AMP + diphosphate. This chain is Arginine--tRNA ligase, found in Brucella melitensis biotype 1 (strain ATCC 23456 / CCUG 17765 / NCTC 10094 / 16M).